Reading from the N-terminus, the 144-residue chain is Large ribosomal subunit protein uL15 (144 aa).

Positions 1–53 are disordered; sequence MRLNTLSPAEGAKHSAKRLGRGIGSGLGKTGGRGHKGQKSRTGGGVRRGFEGG. The segment covering 21 to 31 has biased composition (gly residues); the sequence is RGIGSGLGKTG.

This sequence belongs to the universal ribosomal protein uL15 family. Part of the 50S ribosomal subunit.

In terms of biological role, binds to the 23S rRNA. In Pasteurella multocida (strain Pm70), this protein is Large ribosomal subunit protein uL15.